Here is a 628-residue protein sequence, read N- to C-terminus: DNA mismatch repair protein MutL (628 aa).

The tract at residues 334–367 is disordered; sequence SDFAQPSADNMPKPESPGAPAAHGRKDDAPAAHA. Positions 357–367 are enriched in basic and acidic residues; that stretch reads GRKDDAPAAHA.

This sequence belongs to the DNA mismatch repair MutL/HexB family.

In terms of biological role, this protein is involved in the repair of mismatches in DNA. It is required for dam-dependent methyl-directed DNA mismatch repair. May act as a 'molecular matchmaker', a protein that promotes the formation of a stable complex between two or more DNA-binding proteins in an ATP-dependent manner without itself being part of a final effector complex. The protein is DNA mismatch repair protein MutL of Opitutus terrae (strain DSM 11246 / JCM 15787 / PB90-1).